A 282-amino-acid chain; its full sequence is Probable metal transport system membrane protein TM_0125 (282 aa).

A run of 9 helical transmembrane segments spans residues 33-53 (AFVGGILVASLSGLVSPIVVF), 58-78 (FIGDGTAHAVFAGLAAATLIG), 79-99 (ADHRLIAFATALLFAFAVSLF), 109-129 (AIGILLPFFMAVGVVLFSVSG), 148-168 (STDVAITAVVLALSVILTVVF), 184-204 (FYGIKTDLIRFLITSFIAITV), 210-230 (VVGVILTGALLILPGLVSKIF), 234-254 (FWSLTTISVIFSTGVFFAGFL), and 259-279 (LDLPPGPVIVIIAFVSFLPML).

It belongs to the ABC-3 integral membrane protein family.

The protein localises to the cell inner membrane. In terms of biological role, part of an ATP-driven transport system TM_0123/TM_0124/TM_0125 for a metal. This Thermotoga maritima (strain ATCC 43589 / DSM 3109 / JCM 10099 / NBRC 100826 / MSB8) protein is Probable metal transport system membrane protein TM_0125.